The following is an 883-amino-acid chain: Lysine-specific demethylase JMJ29 (883 aa).

Disordered stretches follow at residues 30 to 62 (KPFM…SAVK) and 161 to 204 (RTHS…SRKQ). Residues 34 to 43 (SKGSSPSSSS) are compositionally biased toward low complexity. Composition is skewed to polar residues over residues 161-172 (RTHSLSANSPEN) and 184-204 (SPAS…SRKQ). Residues Cys-209, Cys-212, Cys-223, Cys-226, Cys-232, Cys-235, Cys-252, Cys-255, Cys-338, Cys-341, Cys-363, and His-381 each contribute to the Zn(2+) site. The RING-type; degenerate zinc-finger motif lies at 209–256 (CHQCLKGERITLLICSECEKTMFCLQCIRKWYPNLSEDDVVEKCPLCR). The B box-type; atypical zinc finger occupies 333-392 (DERVYCDHCATSIVDLHRSCPKCSYELCLKCCQEIREGSLSERPEMKFHYVDRGHRYMHG). The JmjC domain maps to 632–863 (PRTGILNIAT…ECLRLTEEFR (232 aa)). Fe cation is bound by residues His-676 and Asp-678. Residues 713–743 (NKVDKQSTEDCNEKEEEEEEELNMPEISSNE) are disordered. The span at 722–735 (DCNEKEEEEEEELN) shows a compositional bias: acidic residues. Positions 755–762 (FRREDVPK) match the Nuclear localization signal motif. Fe cation is bound at residue His-831.

It belongs to the JARID1 histone demethylase family. Fe(2+) serves as cofactor. Expressed in inflorescences, roots, siliques, leaves and stems.

It is found in the nucleus. May function as histone H3 lysine demethylase and be involved in regulation of gene expression. This Arabidopsis thaliana (Mouse-ear cress) protein is Lysine-specific demethylase JMJ29.